Consider the following 289-residue polypeptide: Metal-staphylopine import system permease protein CntC (289 aa).

5 helical membrane passes run 13–33, 77–97, 115–135, 194–214, and 249–269; these read AVIALGIIVLYVFLGLAAPLV, LLYVFVALFVSVLIGSILGFL, VMLAFPSYVVTLALIALFGMG, IAIISSSSMCSMILQISGFSF, and IAIVIIVMAFNFLSDALQIAI. Residues 73 to 262 enclose the ABC transmembrane type-1 domain; that stretch reads IRPSLLYVFV…IIVMAFNFLS (190 aa).

Belongs to the binding-protein-dependent transport system permease family. The complex is composed of two ATP-binding proteins (CntD and CntF), two transmembrane proteins (CntB and CntC) and a solute-binding protein (CntA).

Its subcellular location is the cell membrane. Its function is as follows. Part of the ABC transporter complex CntABCDF (Opp1) involved in the uptake of metal in complex with the metallophore staphylopine (StP). May be involved in the import of a large array of divalent metals ions such as nickel, cobalt, zinc, copper and iron. Probably responsible for the translocation of the substrate across the membrane. In Staphylococcus aureus (strain Mu50 / ATCC 700699), this protein is Metal-staphylopine import system permease protein CntC.